The following is a 376-amino-acid chain: Carbohydrate sulfotransferase 14 (376 aa).

A disordered region spans residues 1-30; sequence MFPRPLTPLAAPKSAETLGRTPRRAPLGRA. Residues 1–39 are Cytoplasmic-facing; sequence MFPRPLTPLAAPKSAETLGRTPRRAPLGRARAGLGGPPL. The span at 18–30 shows a compositional bias: low complexity; the sequence is LGRTPRRAPLGRA. The helical; Signal-anchor for type II membrane protein transmembrane segment at 40–60 threads the bilayer; the sequence is LLPSMLMFAVIVASSGLLLMI. The Lumenal portion of the chain corresponds to 61–376; that stretch reads ERGILSEMKP…PNVTKEACHQ (316 aa). Residues 76–96 are disordered; it reads PSHKGAAWSGTDPKPRGLSLD. An N-linked (GlcNAc...) asparagine glycan is attached at asparagine 110. 3'-phosphoadenylyl sulfate-binding positions include 155–161 and 213–221; these read PKVACSN and RDPLERLLS. Asparagine 368 carries N-linked (GlcNAc...) asparagine glycosylation.

Belongs to the sulfotransferase 2 family.

It is found in the golgi apparatus membrane. The enzyme catalyses dermatan + n 3'-phosphoadenylyl sulfate = dermatan 4'-sulfate + n adenosine 3',5'-bisphosphate + n H(+). Catalyzes the transfer of sulfate to position 4 of the N-acetylgalactosamine (GalNAc) residue of dermatan sulfate. Plays a pivotal role in the formation of 4-0-sulfated IdoA blocks in dermatan sulfate. Transfers sulfate to the C-4 hydroxyl of beta1,4-linked GalNAc that is substituted with an alpha-linked iduronic acid (IdoUA) at the C-3 hydroxyl. Transfers sulfate more efficiently to GalNAc residues in -IdoUA-GalNAc-IdoUA- than in -GlcUA-GalNAc-GlcUA-sequences. Has preference for partially desulfated dermatan sulfate. Addition of sulfate to GalNAc may occur immediately after epimerization of GlcUA to IdoUA. Appears to have an important role in the formation of the cerebellar neural network during postnatal brain development. The polypeptide is Carbohydrate sulfotransferase 14 (Chst14) (Mus musculus (Mouse)).